The sequence spans 361 residues: Ribosomal RNA large subunit methyltransferase M (361 aa).

S-adenosyl-L-methionine contacts are provided by residues S187, 220-223, D239, D259, and D276; that span reads CPGG. Residue K305 is the Proton acceptor of the active site.

Belongs to the class I-like SAM-binding methyltransferase superfamily. RNA methyltransferase RlmE family. RlmM subfamily. As to quaternary structure, monomer.

It localises to the cytoplasm. It catalyses the reaction cytidine(2498) in 23S rRNA + S-adenosyl-L-methionine = 2'-O-methylcytidine(2498) in 23S rRNA + S-adenosyl-L-homocysteine + H(+). Functionally, catalyzes the 2'-O-methylation at nucleotide C2498 in 23S rRNA. The polypeptide is Ribosomal RNA large subunit methyltransferase M (Shewanella sp. (strain W3-18-1)).